A 254-amino-acid chain; its full sequence is (2Z,6E)-farnesyl diphosphate synthase (254 aa).

Asp-34 is an active-site residue. Position 34 (Asp-34) interacts with Mg(2+). Substrate contacts are provided by residues 35 to 38 (GNRR), Trp-39, His-52, and 80 to 82 (STD). Catalysis depends on Asn-83, which acts as the Proton acceptor. Substrate contacts are provided by residues Arg-86, Arg-203, and 209–211 (RLS). Position 222 (Glu-222) interacts with Mg(2+).

The protein belongs to the UPP synthase family. Z-FPP synthase subfamily. Homodimer. Mg(2+) is required as a cofactor.

It catalyses the reaction isopentenyl diphosphate + (2E)-geranyl diphosphate = (2Z,6E)-farnesyl diphosphate + diphosphate. Functionally, catalyzes the condensation of only one isopentenyl pyrophosphate (IPP) unit in the cis configuration to E-geranyl diphosphate (E-GPP) generating the 15 carbon product (2Z,6E)-farnesyl diphosphate (Z-FPP or EZ-FPP). Only geranyl diphosphate (GPP) can be used as isoprenyl acceptor. In Thermobifida fusca (strain YX), this protein is (2Z,6E)-farnesyl diphosphate synthase.